The following is a 197-amino-acid chain: MALLLLILESCSAGTYALNCKLTVKYRTLQGLCSVNGKTFLDFGDENHEGNATMLCPALYQSLTDISEVMWSLQSGNDALNVTTRSQYYQGEFIDGFWDINTDEQHSIYVYPLNKTWRESHSDNSSAMEQWKNKNLEKDIRNVLMVDFSCCLNKSSPHFREMPTLPTTAAHVDQPRSMACKSSPFDGLIMILLIYIL.

The signal sequence occupies residues 1–17 (MALLLLILESCSAGTYA). N51, N81, and N114 each carry an N-linked (GlcNAc...) asparagine glycan. A lipid anchor (GPI-anchor amidated serine) is attached at S177. A propeptide spans 178-197 (MACKSSPFDGLIMILLIYIL) (removed in mature form).

It belongs to the NKG2D ligand family. Expressed in skin, and weakly in large intestine.

The protein resides in the cell membrane. Ligand for the KLRK1 immunosurveillance receptor. Binding to KLRK1 stimulates cell lysis in vitro. The chain is Histocompatibility antigen 60c from Mus musculus (Mouse).